A 1179-amino-acid chain; its full sequence is Integrin alpha-1 (1179 aa).

Positions 1 to 28 are cleaved as a signal peptide; the sequence is MVPRRPASLEVTVACIWLLTVILGVCIS. At 29-1141 the chain is on the extracellular side; the sequence is FNVDVKNSMS…SKDGLPGRVP (1113 aa). One copy of the FG-GAP 1 repeat lies at 30–91; that stretch reads NVDVKNSMSF…CPVGRERSMP (62 aa). The cysteines at positions 82 and 92 are disulfide-linked. Residues asparagine 100, asparagine 105, asparagine 112, asparagine 217, asparagine 317, asparagine 341, asparagine 402, asparagine 418, and asparagine 459 are each glycosylated (N-linked (GlcNAc...) asparagine). Residues 101 to 160 form an FG-GAP 2 repeat; that stretch reads TSIPNVTEIKENMTFGSTLVTNPKGGFLACGPLYAYRCGHLHYTTGICSDVSPTFQVVNS. In terms of domain architecture, VWFA spans 175 to 364; sequence IVLDGSNSIY…LGERIFALEA (190 aa). The FG-GAP 3 repeat unit spans residues 365–417; it reads TADQSAASFEMEMSQTGFSAHYSQDWVMLGAVGAYDWNGTVVMQKANQIVIPH. 4 FG-GAP repeats span residues 422–474, 475–537, 556–614, and 618–678; these read QTEP…DGDV, NILQ…RFEY, SCTK…TIRK, and QRIP…FEPN. The Ca(2+) site is built by aspartate 497, aspartate 499, aspartate 501, and aspartate 505. N-linked (GlcNAc...) asparagine glycosylation occurs at asparagine 531. Positions 579, 581, 583, 587, 641, 643, 645, and 649 each coordinate Ca(2+). Residues cysteine 687 and cysteine 696 are joined by a disulfide bond. Residues asparagine 698, asparagine 747, and asparagine 779 are each glycosylated (N-linked (GlcNAc...) asparagine). A disulfide bridge connects residues cysteine 702 and cysteine 755. A disulfide bridge links cysteine 807 with cysteine 813. Asparagine 839, asparagine 882, asparagine 907, asparagine 938, asparagine 965, asparagine 973, and asparagine 1007 each carry an N-linked (GlcNAc...) asparagine glycan. Cysteines 877 and 885 form a disulfide. 2 disulfide bridges follow: cysteine 1029–cysteine 1062 and cysteine 1065–cysteine 1072. Residues asparagine 1083, asparagine 1102, and asparagine 1113 are each glycosylated (N-linked (GlcNAc...) asparagine). The chain crosses the membrane as a helical span at residues 1142–1164; the sequence is LWVILLSAFAGLLLLMLLILALW. Residues 1165-1179 lie on the Cytoplasmic side of the membrane; it reads KIGFFKRPLKKKMEK. The GFFKR motif signature appears at 1167–1171; sequence GFFKR.

Belongs to the integrin alpha chain family. Heterodimer of an alpha and a beta subunit. Alpha-1 associates with beta-1. Interacts with RAB21. Interacts (via cytoplasmic domain) with PTPN2; activates PTPN2 phosphatase activity towards EGFR and negatively regulates EGF signaling.

It localises to the membrane. Functionally, integrin alpha-1/beta-1 is a receptor for laminin and collagen. It recognizes the proline-hydroxylated sequence G-F-P-G-E-R in collagen. Involved in anchorage-dependent, negative regulation of EGF-stimulated cell growth. This Mus musculus (Mouse) protein is Integrin alpha-1 (Itga1).